A 587-amino-acid polypeptide reads, in one-letter code: GATA zinc finger domain-containing protein 3 (587 aa).

A compositionally biased stretch (low complexity) spans 53–74; that stretch reads NINNNINNNNNNNNNNNNNNIN. 3 disordered regions span residues 53-141, 179-294, and 312-392; these read NINN…LKIP, QLAH…SSPS, and QTSP…ATIN. A compositionally biased stretch (polar residues) spans 75–86; that stretch reads QYHQNHYDQYSD. Composition is skewed to low complexity over residues 87 to 136, 183 to 202, 237 to 264, 272 to 292, and 316 to 333; these read NNCN…NNNN, NSSM…TPTS, NING…INNG, GNNN…NSSS, and SQQS…QQSQ. Polar residues-rich tracts occupy residues 340 to 358 and 365 to 379; these read INTT…TNSP and NESS…TPLS. A GATA-type zinc finger spans residues 500–525; that stretch reads CIFCGTMETPEWRKGPGGHKTLCNAC. A disordered region spans residues 536 to 587; that stretch reads ENQNNGGSPNPQQNNVTTTTTTTTSTSTNSPNSNGNNFSPESAMSVSKLISD. Positions 538-575 are enriched in low complexity; sequence QNNGGSPNPQQNNVTTTTTTTTSTSTNSPNSNGNNFSP. A compositionally biased stretch (polar residues) spans 577–587; that stretch reads SAMSVSKLISD.

This Dictyostelium discoideum (Social amoeba) protein is GATA zinc finger domain-containing protein 3 (gtaC).